Reading from the N-terminus, the 1863-residue chain is 5'-3' DNA helicase ZGRF1 (1863 aa).

Disordered regions lie at residues 78-110, 132-196, and 300-349; these read SRAV…QPSG, ENSE…PLSL, and TQSI…PEAQ. Residues 81 to 90 show a composition bias toward basic and acidic residues; it reads VEPDGSREAL. Over residues 92 to 105 the composition is skewed to low complexity; it reads SGSRTLVSSSRSLG. Polar residues-rich tracts occupy residues 173–185 and 300–321; these read PVST…ITFS and TQSI…TTSR. Phosphoserine occurs at positions 331 and 445. 3 disordered regions span residues 460-496, 524-545, and 610-664; these read PVSP…SKSN, TSDT…ERWE, and GDVK…GVSP. The span at 533–545 shows a compositional bias: basic and acidic residues; sequence EDSRLSQDSERWE. Zn(2+)-binding residues include Cys-1111, His-1113, Cys-1136, and Cys-1144. Residues 1111–1153 form a GRF-type zinc finger; that stretch reads CHHNQPAKLVMVKKEGPNKGRLFYTCDKSKDNQCKFFKWLEEV.

As to quaternary structure, interacts with DNA repair protein RAD51; the interaction promotes RAD51 strand exchange activity. Also interacts with DNA repair proteins EXO1 and BRCA1; the interactions are increased following DNA damage induction.

It localises to the nucleus. The catalysed reaction is ATP + H2O = ADP + phosphate + H(+). The enzyme catalyses Couples ATP hydrolysis with the unwinding of duplex DNA at the replication fork by translocating in the 5'-3' direction. This creates two antiparallel DNA single strands (ssDNA). The leading ssDNA polymer is the template for DNA polymerase III holoenzyme which synthesizes a continuous strand.. 5'-3' DNA helicase which is recruited to sites of DNA damage and promotes repair of replication-blocking DNA lesions through stimulation of homologous recombination (HR). Promotes HR by directly stimulating RAD51-mediated strand exchange activity. Not required to load RAD51 at sites of DNA damage but promotes recombinational repair after RAD51 recruitment. Also promotes HR by positively regulating EXO1-mediated DNA end resection of DNA double-strand breaks. Required for recruitment of replication protein RPA2 to DNA damage sites. Promotes the initiation of the G2/M checkpoint but not its maintenance. Catalyzes Holliday junction branch migration and dissociation of D-loops and DNA flaps. The chain is 5'-3' DNA helicase ZGRF1 (Zgrf1) from Mus musculus (Mouse).